Reading from the N-terminus, the 123-residue chain is Small ribosomal subunit protein uS13 (123 aa).

Residues 94–123 (AGLPVRGQRTKTNARTRKGPKKTVGVQRKK) form a disordered region. A compositionally biased stretch (basic residues) spans 101–123 (QRTKTNARTRKGPKKTVGVQRKK).

The protein belongs to the universal ribosomal protein uS13 family. Part of the 30S ribosomal subunit. Forms a loose heterodimer with protein S19. Forms two bridges to the 50S subunit in the 70S ribosome.

Functionally, located at the top of the head of the 30S subunit, it contacts several helices of the 16S rRNA. In the 70S ribosome it contacts the 23S rRNA (bridge B1a) and protein L5 of the 50S subunit (bridge B1b), connecting the 2 subunits; these bridges are implicated in subunit movement. Contacts the tRNAs in the A and P-sites. This Acetivibrio thermocellus (strain ATCC 27405 / DSM 1237 / JCM 9322 / NBRC 103400 / NCIMB 10682 / NRRL B-4536 / VPI 7372) (Clostridium thermocellum) protein is Small ribosomal subunit protein uS13.